The sequence spans 48 residues: MTKRTLSNKSRYSVLKLSGFRSRMATPQGRKTIRNRRKKGRKNLTLRR.

The segment at 18–48 is disordered; the sequence is SGFRSRMATPQGRKTIRNRRKKGRKNLTLRR. Over residues 31–48 the composition is skewed to basic residues; sequence KTIRNRRKKGRKNLTLRR.

Belongs to the bacterial ribosomal protein bL34 family.

It is found in the plastid. Its subcellular location is the chloroplast. This is Large ribosomal subunit protein bL34c from Phaeodactylum tricornutum (strain CCAP 1055/1).